Here is a 597-residue protein sequence, read N- to C-terminus: Lipoprotein LpqB (597 aa).

The first 28 residues, 1–28 (MTPGSRSAMRSRSVCGAIALAVLVTVSG), serve as a signal peptide directing secretion. The N-palmitoyl cysteine moiety is linked to residue cysteine 29. Cysteine 29 carries S-diacylglycerol cysteine lipidation. The segment covering 39 to 51 (QAIGTINRDSPGS) has biased composition (polar residues). Residues 39-59 (QAIGTINRDSPGSSVAAPAPG) form a disordered region.

It belongs to the LpqB lipoprotein family.

The protein localises to the cell membrane. This chain is Lipoprotein LpqB, found in Rhodococcus opacus (strain B4).